A 94-amino-acid chain; its full sequence is Integration host factor subunit beta (94 aa).

Belongs to the bacterial histone-like protein family. Heterodimer of an alpha and a beta chain.

In terms of biological role, this protein is one of the two subunits of integration host factor, a specific DNA-binding protein that functions in genetic recombination as well as in transcriptional and translational control. The protein is Integration host factor subunit beta of Salmonella arizonae (strain ATCC BAA-731 / CDC346-86 / RSK2980).